Reading from the N-terminus, the 232-residue chain is Large ribosomal subunit protein uL1 (232 aa).

It belongs to the universal ribosomal protein uL1 family. In terms of assembly, part of the 50S ribosomal subunit.

Functionally, binds directly to 23S rRNA. The L1 stalk is quite mobile in the ribosome, and is involved in E site tRNA release. Protein L1 is also a translational repressor protein, it controls the translation of the L11 operon by binding to its mRNA. This chain is Large ribosomal subunit protein uL1, found in Bacillus pumilus (strain SAFR-032).